We begin with the raw amino-acid sequence, 44 residues long: MADKPDMGEIASFDKAKLKKTETQEKNTLPTKETIEQEKRSEIS.

2 stretches are compositionally biased toward basic and acidic residues: residues 1-25 (MADK…ETQE) and 33-44 (ETIEQEKRSEIS). The tract at residues 1 to 44 (MADKPDMGEIASFDKAKLKKTETQEKNTLPTKETIEQEKRSEIS) is disordered. An N-acetylalanine modification is found at Ala-2. Lys-4 bears the N6-acetyllysine mark. Ser-12 is modified (phosphoserine). Position 15 is an N6-acetyllysine (Lys-15). Residues Thr-21, Thr-23, and Thr-34 each carry the phosphothreonine modification. N6-acetyllysine is present on Lys-39. At Ser-41 the chain carries Phosphoserine.

It belongs to the thymosin beta family.

The protein localises to the cytoplasm. It localises to the cytoskeleton. In terms of biological role, plays an important role in the organization of the cytoskeleton. Binds to and sequesters actin monomers (G actin) and therefore inhibits actin polymerization. The chain is Thymosin beta-10 (Tmsb10) from Rattus norvegicus (Rat).